The primary structure comprises 149 residues: Calmodulin-1 (149 aa).

Ala2 is subject to N-acetylalanine. EF-hand domains follow at residues 8–43, 44–79, 81–116, and 117–149; these read DQIS…LGQN, PTEA…KMKD, DSEE…LGEK, and LTDE…MMAK. Asp21, Asp23, Asp25, Cys27, Glu32, Asp57, Asp59, Asn61, Thr63, Glu68, Asp94, Asp96, Asn98, and Glu105 together coordinate Ca(2+). An N6,N6,N6-trimethyllysine modification is found at Lys116. Ca(2+) contacts are provided by Asp130, Asp132, Asp134, Gln136, and Glu141.

Belongs to the calmodulin family.

Functionally, calmodulin mediates the control of a large number of enzymes, ion channels and other proteins by Ca(2+). Among the enzymes to be stimulated by the calmodulin-Ca(2+) complex are a number of protein kinases and phosphatases. This chain is Calmodulin-1 (CAM81), found in Petunia hybrida (Petunia).